Reading from the N-terminus, the 395-residue chain is MRN complex-interacting protein (395 aa).

Basic and acidic residues predominate over residues 90-100 (DPKSEQEEAHV). Disordered stretches follow at residues 90-155 (DPKS…GGNC) and 180-275 (KRSS…FGES). The segment covering 104–113 (SKYTDQTTEG) has biased composition (polar residues). Positions 117–127 (EKDDEDEDENV) are enriched in acidic residues. Positions 142–145 (RKKM) match the Nuclear localization signal (NLS) motif. Residues 183-195 (SSSWNKGSVSKYS) are compositionally biased toward low complexity. Composition is skewed to polar residues over residues 224 to 244 (ACSSSTNTMENSIGNKQQIKS) and 260 to 270 (QSESPSVSSHQ).

The protein belongs to the MRNIP family.

Its subcellular location is the nucleus. It localises to the nucleoplasm. In terms of biological role, plays a role in the cellular response to DNA damage and the maintenance of genome stability through its association with the MRN damage-sensing complex. Promotes chromatin loading and activity of the MRN complex to facilitate subsequent ATM-mediated DNA damage response signaling and DNA repair. The sequence is that of MRN complex-interacting protein from Danio rerio (Zebrafish).